Consider the following 466-residue polypeptide: Delta-1 crystallin (466 aa).

The protein belongs to the lyase 1 family. Argininosuccinate lyase subfamily. As to quaternary structure, homotetramer. Eye lens.

Functionally, delta crystallin, the principal crystallin in embryonic lens, is found only in birds and reptiles. The protein is Delta-1 crystallin (ASL1) of Meleagris gallopavo (Wild turkey).